A 751-amino-acid polypeptide reads, in one-letter code: Proton-associated sugar transporter A (751 aa).

A run of 6 helical transmembrane segments spans residues 93–113, 123–143, 155–175, 191–211, 233–253, and 268–288; these read ILFG…PVLL, SLVW…LGAW, RPFI…LLNG, WGIL…DSAD, IHAL…GIHW, and VIYI…LVSI. Threonine 500 carries the phosphothreonine modification. 6 helical membrane passes run 536–556, 576–596, 606–626, 630–650, 688–708, and 710–730; these read GWLS…EVVF, VTMG…YSAI, VRTL…LATL, LYVV…LCTL, FLAQ…VGSA, and GVMY…SLCV.

Belongs to the glycoside-pentoside-hexuronide (GPH) cation symporter transporter (TC 2.A.2) family. Predominantly expressed in brain.

Its subcellular location is the membrane. It catalyses the reaction D-galactose(in) + H(+)(in) = D-galactose(out) + H(+)(out). The enzyme catalyses D-glucose(out) + H(+)(out) = D-glucose(in) + H(+)(in). Its function is as follows. Proton-associated glucose transporter in the brain. The sequence is that of Proton-associated sugar transporter A from Rattus norvegicus (Rat).